We begin with the raw amino-acid sequence, 883 residues long: MSKTPADNHTPMMRQYFGLKSQHPNQLLFYRMGDFYELFYDDAKRASRLLDITLTARGHSGGIPIPMAGIPYHAAENYIARLVRMGESVVVAEQTGDPATSKGPVERQIARIVTPGTISDEAFLEEKRENLLLSLAHQSRKGLDIFGFSYLDMASGRFCLFEVDGHEALSSELQRLSPREILISEDFPARATLKLEKGISELGPWHFDYESSYRQLIQQFSTKDLSGFGCEAMTAAIASAGALLQYAKDTQRSALPHIQSIMVEHKDDSVLIDGATRRNLEIDINLTGGTSNTLVEVLDKCSTPMGSRLLKRWLHTPIRDLNEIQARQQVVAELQQNQSYNAFEAPLKKVGDLERILSRVALRSARPRDLLRLRFALEAAPEINGLLANATSERLQELNLRILAQPIITETLAKALVENPPSVVRDGGIFAKGYDEELDELLALSTNATDFLAEMERSEKARTGISSLKVGFNRVHGYYIEISRLHSDQAPVEYIRRQTLKNAERFITPELKAFEDKALSAKSKSLAREKELYEALLEQLNEILGELQTTSQALAQLDVLNNFAERANALSFTCPELHNRGGIQIVGGRHPVVESVISEPFVPNDLDLNDKRSLLMITGPNMGGKSTYMRQIALITLLAHTGCFVPAESASISVVDRIFTRMGSSDDLAGGRSTFMVEMTETANILNNASKNSLVLMDEVGRGTSTFDGLSLAWAAVDYLANKLKCYVLFATHYFELTTLADQLENAANVHLTATEYEDEIVFLHKVHEGPASQSYGLQVAQLAGVPRDVIGHAKQKLKELEVVTGIDLDTKTIETKANSSSIKAKTKEHLVKESKNGYQPQQVDMFAQAEQNALKNALEELDLDNMTPLEAISALYKLKSQL.

619-626 (GPNMGGKS) is an ATP binding site.

The protein belongs to the DNA mismatch repair MutS family.

In terms of biological role, this protein is involved in the repair of mismatches in DNA. It is possible that it carries out the mismatch recognition step. This protein has a weak ATPase activity. This chain is DNA mismatch repair protein MutS, found in Marinomonas sp. (strain MWYL1).